The following is a 107-amino-acid chain: uncharacterized protein (107 aa).

A helical transmembrane segment spans residues 9–31; that stretch reads AAAIITAPTILAMMSTVLRALIF.

The protein localises to the membrane. This is an uncharacterized protein from Archaeoglobus fulgidus (strain ATCC 49558 / DSM 4304 / JCM 9628 / NBRC 100126 / VC-16).